A 348-amino-acid chain; its full sequence is MAPQAHDRDKALDLALAQIDKNFGKGSVMRLGEGVRQPIAVIPTGSISLDVALGIGGLPRGRVVEIYGPESSGKTTVALHAVANAQAAGGIAAFIDAEHALDPDYAQKLGVDTDALLVSQPDTGEQALEIADMLIRSGALDILVVDSVAALVPRAEIEGEMGDSHVGLQARLMSQALRKMTGALSNSGTTAIFINQLREKIGVMFGSPETTTGGKALKFYSSVRLDVRRIETLKDGTDAVGNRTRVKVVKNKVAPPFKQAEFDILYGQGISKEGSLIDMGVEHGFIRKSGSWYTYEGDQLGQGKENARKFLLENTDIRDEIEKKIKEKLGIGADVTAAATDDAAPVEF.

68–75 provides a ligand contact to ATP; sequence GPESSGKT.

It belongs to the RecA family.

It localises to the cytoplasm. Can catalyze the hydrolysis of ATP in the presence of single-stranded DNA, the ATP-dependent uptake of single-stranded DNA by duplex DNA, and the ATP-dependent hybridization of homologous single-stranded DNAs. It interacts with LexA causing its activation and leading to its autocatalytic cleavage. In Rhodococcus opacus (strain B4), this protein is Protein RecA.